Consider the following 149-residue polypeptide: Cytochrome c-type biogenesis protein CcmE (149 aa).

Over 1–7 (MKARHKR) the chain is Cytoplasmic. Residues 8–28 (LGLIVAGLAALGLGAALVLSA) form a helical; Signal-anchor for type II membrane protein membrane-spanning segment. Residues 29–149 (FQKNLVFFFT…GAPALAGALK (121 aa)) are Periplasmic-facing. Heme-binding residues include histidine 123 and tyrosine 127.

Belongs to the CcmE/CycJ family.

It is found in the cell inner membrane. Heme chaperone required for the biogenesis of c-type cytochromes. Transiently binds heme delivered by CcmC and transfers the heme to apo-cytochromes in a process facilitated by CcmF and CcmH. The protein is Cytochrome c-type biogenesis protein CcmE of Polaromonas naphthalenivorans (strain CJ2).